We begin with the raw amino-acid sequence, 212 residues long: Thymidylate kinase (212 aa).

10 to 17 serves as a coordination point for ATP; it reads GLEGAGKT.

Belongs to the thymidylate kinase family.

It carries out the reaction dTMP + ATP = dTDP + ADP. Phosphorylation of dTMP to form dTDP in both de novo and salvage pathways of dTTP synthesis. The chain is Thymidylate kinase from Yersinia pseudotuberculosis serotype O:1b (strain IP 31758).